The primary structure comprises 309 residues: Heme-dependent oxidative N-demethylase beta subunit (309 aa).

The FAD-binding FR-type domain occupies 2-103; it reads STLLDVRVAA…SPPANLFPLH (102 aa). The region spanning 226–309 is the 2Fe-2S ferredoxin-type domain; the sequence is FRVELARSGQ…GCGSPILLDL (84 aa). Residues C260, C265, C268, and C296 each coordinate [2Fe-2S] cluster.

This sequence belongs to the PDR/VanB family. As to quaternary structure, the heme-dependent oxidative N-demethylase (HODM) is a heterotetramer composed of a catalytic alpha subunit, a FMN/2Fe-2S-dependent oxidoreductase beta subunit, a gamma subunit with putative aminotransferase activity, and a delta subunit of unknown function. It depends on [2Fe-2S] cluster as a cofactor. Requires FMN as cofactor.

Component of the heme-dependent oxidative N-demethylase (HODM) enzyme, that catalyzes the NADPH-dependent oxidation of dimethylamine (DMA) to methylamine (MA) and formaldehyde. Functions in bacterial methylated amine catabolism, linking alkylamine oxidation to the tetrahydrofolate C1 pool. The beta subunit of HODM binds FMN and a 2Fe-2S cluster, and likely reduces the ferric heme iron of the alpha subunit to ferrous using NADPH. The protein is Heme-dependent oxidative N-demethylase beta subunit of Ectopseudomonas mendocina (strain ymp) (Pseudomonas mendocina).